The following is a 183-amino-acid chain: Glutathione-regulated potassium-efflux system ancillary protein KefG (183 aa).

This sequence belongs to the NAD(P)H dehydrogenase (quinone) family. KefG subfamily. Interacts with KefB.

The protein localises to the cell inner membrane. The catalysed reaction is a quinone + NADH + H(+) = a quinol + NAD(+). The enzyme catalyses a quinone + NADPH + H(+) = a quinol + NADP(+). Its function is as follows. Regulatory subunit of a potassium efflux system that confers protection against electrophiles. Required for full activity of KefB. In Escherichia coli O6:K15:H31 (strain 536 / UPEC), this protein is Glutathione-regulated potassium-efflux system ancillary protein KefG.